We begin with the raw amino-acid sequence, 507 residues long: Probable bifunctional methylthioribulose-1-phosphate dehydratase/enolase-phosphatase E1 (507 aa).

Alanine 2 is modified (N-acetylalanine). The methylthioribulose-1-phosphate dehydratase stretch occupies residues 2-237 (AVAAAAMIGL…AIKLHQLGLD (236 aa)). Cysteine 109 serves as a coordination point for substrate. 2 residues coordinate Zn(2+): histidine 127 and histidine 129. Glutamate 152 functions as the Proton donor/acceptor in the catalytic mechanism. Residue histidine 202 coordinates Zn(2+). The enolase-phosphatase E1 stretch occupies residues 268-507 (IVLDIEGTTT…FKTVTSFSQI (240 aa)). 2 residues coordinate Mg(2+): aspartate 271 and glutamate 273. Substrate contacts are provided by residues 406-407 (SS) and lysine 440. Aspartate 466 is a binding site for Mg(2+).

This sequence in the N-terminal section; belongs to the aldolase class II family. MtnB subfamily. It in the C-terminal section; belongs to the HAD-like hydrolase superfamily. MasA/MtnC family. Zn(2+) serves as cofactor. Mg(2+) is required as a cofactor.

The catalysed reaction is 5-(methylsulfanyl)-D-ribulose 1-phosphate = 5-methylsulfanyl-2,3-dioxopentyl phosphate + H2O. The enzyme catalyses 5-methylsulfanyl-2,3-dioxopentyl phosphate + H2O = 1,2-dihydroxy-5-(methylsulfanyl)pent-1-en-3-one + phosphate. Its pathway is amino-acid biosynthesis; L-methionine biosynthesis via salvage pathway; L-methionine from S-methyl-5-thio-alpha-D-ribose 1-phosphate: step 2/6. It participates in amino-acid biosynthesis; L-methionine biosynthesis via salvage pathway; L-methionine from S-methyl-5-thio-alpha-D-ribose 1-phosphate: step 3/6. It functions in the pathway amino-acid biosynthesis; L-methionine biosynthesis via salvage pathway; L-methionine from S-methyl-5-thio-alpha-D-ribose 1-phosphate: step 4/6. This Arabidopsis thaliana (Mouse-ear cress) protein is Probable bifunctional methylthioribulose-1-phosphate dehydratase/enolase-phosphatase E1.